Here is a 389-residue protein sequence, read N- to C-terminus: Nuclear receptor subfamily 2 group F member 1-B (389 aa).

Positions 19–39 (DDQSAAGREHLQHRHSPKSAE) are disordered. The segment at residues 51–126 (HVECVVCGDK…VGMRREAVQR (76 aa)) is a DNA-binding region (nuclear receptor). NR C4-type zinc fingers lie at residues 54-74 (CVVC…CEGC) and 90-109 (CRAN…CQYC). The 227-residue stretch at 152–378 (YLSGYISLLL…TLIRDMLLSG (227 aa)) folds into the NR LBD domain.

Belongs to the nuclear hormone receptor family. NR2 subfamily. In terms of tissue distribution, expressed the retina, where expression is restricted to the outer nuclear layer.

Its subcellular location is the nucleus. In terms of biological role, putative transcription factor that is required in photoreceptor cells precursors during eye development. In Danio rerio (Zebrafish), this protein is Nuclear receptor subfamily 2 group F member 1-B.